Here is a 142-residue protein sequence, read N- to C-terminus: ATP synthase epsilon chain (142 aa).

This sequence belongs to the ATPase epsilon chain family. As to quaternary structure, F-type ATPases have 2 components, CF(1) - the catalytic core - and CF(0) - the membrane proton channel. CF(1) has five subunits: alpha(3), beta(3), gamma(1), delta(1), epsilon(1). CF(0) has three main subunits: a, b and c.

It is found in the cell inner membrane. Functionally, produces ATP from ADP in the presence of a proton gradient across the membrane. This is ATP synthase epsilon chain from Shewanella pealeana (strain ATCC 700345 / ANG-SQ1).